Reading from the N-terminus, the 1025-residue chain is Retrovirus-related Pol polyprotein from type-1 retrotransposable element R2 (1025 aa).

Polar residues predominate over residues 1-11; sequence NQIKKSNTSTG. A disordered region spans residues 1–38; sequence NQIKKSNTSTGARIPKAMTNPADNFAGGQWKPPGRRSA. The segment at 46–69 adopts a C2H2-type zinc-finger fold; that stretch reads FVCEHCLRAFTTNTGRGLHIKRAH. Positions 146–158 are enriched in basic and acidic residues; the sequence is NRARETELTRLET. The tract at residues 146–172 is disordered; that stretch reads NRARETELTRLETADEDPASQEQDNPN. The region spanning 358-635 is the Reverse transcriptase domain; sequence MIMYHGQCPR…DQWKYLGVVY (278 aa). The segment at 755–1025 is nucleic acid-binding endonuclease; that stretch reads SLLGGDWVAE…YRTERRRTAN (271 aa).

It carries out the reaction DNA(n) + a 2'-deoxyribonucleoside 5'-triphosphate = DNA(n+1) + diphosphate. The protein is Retrovirus-related Pol polyprotein from type-1 retrotransposable element R2 of Nasonia vitripennis (Parasitic wasp).